The chain runs to 389 residues: Gibberellin 20 oxidase 2 (389 aa).

Residues 1–17 (MVAEHPTPPQPHQPPPM) show a composition bias toward pro residues. Residues 1-23 (MVAEHPTPPQPHQPPPMDSTAGS) are disordered. Positions 224–324 (DSSSIMRCNY…RRSLAFFLCP (101 aa)) constitute a Fe2OG dioxygenase domain. Positions 249, 251, and 305 each coordinate Fe cation. Residue Arg315 is part of the active site.

This sequence belongs to the iron/ascorbate-dependent oxidoreductase family. GA20OX subfamily. Requires Fe cation as cofactor. L-ascorbate is required as a cofactor.

The enzyme catalyses gibberellin A12 + 2 2-oxoglutarate + 3 O2 + H(+) = gibberellin A9 + 2 succinate + 3 CO2 + 2 H2O. It catalyses the reaction gibberellin A53 + 2 2-oxoglutarate + 3 O2 + H(+) = gibberellin A20 + 2 succinate + 3 CO2 + 2 H2O. Functionally, key oxidase enzyme in the biosynthesis of gibberellin that catalyzes the conversion of GA53 to GA20 via a three-step oxidation at C-20 of the GA skeleton. This Oryza sativa subsp. indica (Rice) protein is Gibberellin 20 oxidase 2 (20ox2).